A 238-amino-acid polypeptide reads, in one-letter code: Zinc import ATP-binding protein ZnuC (238 aa).

Residues 5–220 (VKLKNVCVNL…LEFISIFGLK (216 aa)) enclose the ABC transporter domain. 37-44 (GPNGAGKS) contacts ATP.

The protein belongs to the ABC transporter superfamily. Zinc importer (TC 3.A.1.15.5) family. The complex is composed of two ATP-binding proteins (ZnuC), two transmembrane proteins (ZnuB) and a solute-binding protein (ZnuA).

The protein localises to the cell inner membrane. It catalyses the reaction Zn(2+)(out) + ATP(in) + H2O(in) = Zn(2+)(in) + ADP(in) + phosphate(in) + H(+)(in). In terms of biological role, part of the ABC transporter complex ZnuABC involved in zinc import. Responsible for energy coupling to the transport system. The chain is Zinc import ATP-binding protein ZnuC from Buchnera aphidicola subsp. Acyrthosiphon pisum (strain APS) (Acyrthosiphon pisum symbiotic bacterium).